The following is a 315-amino-acid chain: Putative protein phosphatase 2C 24 (315 aa).

The 244-residue stretch at 71-314 folds into the PPM-type phosphatase domain; it reads ALRMEAASCF…DDITVVVAYI (244 aa). Mn(2+) contacts are provided by D102, G103, D238, and D305.

This sequence belongs to the PP2C family. Mg(2+) serves as cofactor. It depends on Mn(2+) as a cofactor.

The enzyme catalyses O-phospho-L-seryl-[protein] + H2O = L-seryl-[protein] + phosphate. The catalysed reaction is O-phospho-L-threonyl-[protein] + H2O = L-threonyl-[protein] + phosphate. The polypeptide is Putative protein phosphatase 2C 24 (Oryza sativa subsp. japonica (Rice)).